The sequence spans 1746 residues: tRNA (32-2'-O)-methyltransferase regulator THADA (1746 aa).

The stretch at 1252 to 1286 forms a coiled coil; it reads EQALAEIRRIVVELKALQLRLKNTEAANTKLNTNV.

This sequence belongs to the THADA family. Interacts with SERCA. Detected in the larval fat body, salivary glands and wing imaginal disks (at protein level).

The protein resides in the endoplasmic reticulum. Together with methyltransferase Trm7-32, methylates the 2'-O-ribose of nucleotides at position 32 of the anticodon loop of substrate tRNAs. Plays a key role in energy homeostasis by regulating the balance between energy storage and heat production. Functions by negatively regulating Ca(2+) signaling pathways that are involved in heat production and maintaining correct lipid storage in the fat body. Regulates Ca(2+) signaling pathways by reducing the activity of the calcium-transporting ATPase SERCA possibly by promoting uncoupling of SERCA ATP hydrolysis from calcium pumping. May also function in the nervous system to control feeding behavior. This chain is tRNA (32-2'-O)-methyltransferase regulator THADA, found in Drosophila melanogaster (Fruit fly).